Consider the following 205-residue polypeptide: Ribonuclease HII (205 aa).

In terms of domain architecture, RNase H type-2 spans 16–205 (VSEVGIDEVG…KSFLNQSDLI (190 aa)). A divalent metal cation contacts are provided by aspartate 22, glutamate 23, and aspartate 118.

Belongs to the RNase HII family. It depends on Mn(2+) as a cofactor. Requires Mg(2+) as cofactor.

The protein resides in the cytoplasm. The enzyme catalyses Endonucleolytic cleavage to 5'-phosphomonoester.. In terms of biological role, endonuclease that specifically degrades the RNA of RNA-DNA hybrids. This chain is Ribonuclease HII, found in Prochlorococcus marinus (strain MIT 9312).